The sequence spans 238 residues: Ribosomal RNA small subunit methyltransferase G (238 aa).

Residues Gly77, Phe82, 128–129 (AE), and Arg147 each bind S-adenosyl-L-methionine.

Belongs to the methyltransferase superfamily. RNA methyltransferase RsmG family.

It is found in the cytoplasm. Functionally, specifically methylates the N7 position of guanine in position 535 of 16S rRNA. The sequence is that of Ribosomal RNA small subunit methyltransferase G from Lysinibacillus sphaericus (strain C3-41).